The chain runs to 99 residues: Large ribosomal subunit protein bL21 (99 aa).

The protein belongs to the bacterial ribosomal protein bL21 family. Part of the 50S ribosomal subunit. Contacts protein L20.

Functionally, this protein binds to 23S rRNA in the presence of protein L20. In Mycoplasmopsis agalactiae (strain NCTC 10123 / CIP 59.7 / PG2) (Mycoplasma agalactiae), this protein is Large ribosomal subunit protein bL21.